Consider the following 942-residue polypeptide: Leucine--tRNA ligase 1 (942 aa).

A 'HIGH' region motif is present at residues Pro39–His49. The 'KMSKS' region motif lies at Lys624–Ser628. ATP is bound at residue Lys627.

This sequence belongs to the class-I aminoacyl-tRNA synthetase family.

It localises to the cytoplasm. It carries out the reaction tRNA(Leu) + L-leucine + ATP = L-leucyl-tRNA(Leu) + AMP + diphosphate. The sequence is that of Leucine--tRNA ligase 1 from Sulfolobus acidocaldarius (strain ATCC 33909 / DSM 639 / JCM 8929 / NBRC 15157 / NCIMB 11770).